The sequence spans 1515 residues: Homeobox protein cut-like 1 (1515 aa).

A coiled-coil region spans residues 56–361 (LLKSFQGEID…VKKELNTLKS (306 aa)). The span at 393–405 (ENATLRISNSDLS) shows a compositional bias: polar residues. 4 disordered regions span residues 393 to 453 (ENAT…SPAG), 509 to 546 (PYST…ISEG), 644 to 666 (PKRR…TGSD), and 680 to 702 (LQVQ…NSDD). Residues 422–432 (GPLPASPPPQL) are compositionally biased toward pro residues. The residue at position 427 (S427) is a Phosphoserine. Residues 436–447 (TGEQVSNTNGTH) show a composition bias toward polar residues. A compositionally biased stretch (low complexity) spans 514 to 544 (SISSPSPLQQSPDVNGMAPSPSQSESAGSIS). Positions 540–627 (AGSISEGEEI…ILALRSIQGR (88 aa)) form a DNA-binding region, CUT 1. S761 is subject to Phosphoserine. Disordered regions lie at residues 769-871 (PETS…SASA) and 884-923 (YSQS…PSVP). Glycyl lysine isopeptide (Lys-Gly) (interchain with G-Cter in SUMO2) cross-links involve residues K783, K809, and K840. The span at 828–852 (PERRNLTSSEETKADETTASGKERA) shows a compositional bias: basic and acidic residues. 2 stretches are compositionally biased toward polar residues: residues 853-868 (GSSQ…QGPS) and 884-906 (YSQS…NSPL). Phosphoserine is present on S904. Residues 929 to 1016 (QYEVYMYQEV…QGVLPVQGQQ (88 aa)) constitute a DNA-binding region (CUT 2). Residues 1032–1044 (QQGCVSSESTPKT) are compositionally biased toward polar residues. The tract at residues 1032-1105 (QQGCVSSEST…QPTTPLPLSG (74 aa)) is disordered. Residues 1045 to 1061 (SASCSPAPESPMSSSES) show a composition bias toward low complexity. 2 positions are modified to phosphoserine: S1054 and S1064. The segment at residues 1112 to 1199 (QELVAMSPEL…VEKLMDMKRM (88 aa)) is a DNA-binding region (CUT 3). The segment at 1207-1242 (RRHSSVSDSQPCEPPSVGIDYSQGASPQPQHQLKKP) is disordered. A DNA-binding region (homeobox) is located at residues 1239 to 1298 (LKKPRVVLAPEEKEALKRAYQQKPYPSPKTIEELATQLNLKTSTVINWFHNYRSRIRREL). Phosphoserine is present on S1265. A Glycyl lysine isopeptide (Lys-Gly) (interchain with G-Cter in SUMO2) cross-link involves residue K1279. The tract at residues 1307–1488 (SQGQAGASDS…AGARDNPVRK (182 aa)) is disordered. A compositionally biased stretch (low complexity) spans 1313 to 1328 (ASDSPSARSSRAAPSS). Residues 1331–1343 (DSCDGVEATDAEE) are compositionally biased toward acidic residues. At S1332 the chain carries Phosphoserine. Basic and acidic residues predominate over residues 1365 to 1378 (ADREEATQPAEKAK). The segment covering 1406 to 1468 (ADAPAPVPSL…ANAPARRPSS (63 aa)) has biased composition (low complexity). Phosphoserine is present on residues S1468, S1496, and S1506.

This sequence belongs to the CUT homeobox family. As to quaternary structure, interacts with BANP. Interacts with SATB1 (via DNA-binding domains); the interaction inhibits the attachment of both proteins to DNA. Phosphorylated by PKA. Post-translationally, as cells progress into S phase, a fraction of CUX1 molecules is proteolytically processed into N-terminally truncated proteins of 110 kDa by CTSL. Cell cycle-dependent processing of CUX1 serves to generate a CDP/Cux p110 with distinct DNA binding and transcriptional properties. Testis-specific where it is expressed in germ cells.

Its subcellular location is the nucleus. Functionally, transcription factor involved in the control of neuronal differentiation in the brain. Regulates dendrite development and branching, and dendritic spine formation in cortical layers II-III. Also involved in the control of synaptogenesis. In addition, it has probably a broad role in mammalian development as a repressor of developmentally regulated gene expression. May act by preventing binding of positively-activing CCAAT factors to promoters. Component of nf-munr repressor; binds to the matrix attachment regions (MARs) (5' and 3') of the immunoglobulin heavy chain enhancer. Represses T-cell receptor (TCR) beta enhancer function by binding to MARbeta, an ATC-rich DNA sequence located upstream of the TCR beta enhancer. Binds to the TH enhancer; may require the basic helix-loop-helix protein TCF4 as a coactivator. Its function is as follows. Plays a role in cell cycle progression, in particular at the G1/S transition. As cells progress into S phase, a fraction of CUX1 molecules is proteolytically processed into N-terminally truncated proteins of 110 kDa. While CUX1 only transiently binds to DNA and carries the CCAAT-displacement activity, CDP/Cux p110 makes a stable interaction with DNA and stimulates expression of genes such as POLA1. The chain is Homeobox protein cut-like 1 from Mus musculus (Mouse).